The chain runs to 135 residues: Endoribonuclease YbeY (135 aa).

Zn(2+) contacts are provided by histidine 102, histidine 106, and histidine 112.

The protein belongs to the endoribonuclease YbeY family. Requires Zn(2+) as cofactor.

The protein resides in the cytoplasm. Its function is as follows. Single strand-specific metallo-endoribonuclease involved in late-stage 70S ribosome quality control and in maturation of the 3' terminus of the 16S rRNA. The chain is Endoribonuclease YbeY from Rubrobacter xylanophilus (strain DSM 9941 / JCM 11954 / NBRC 16129 / PRD-1).